The following is a 423-amino-acid chain: uncharacterized protein (423 aa).

Residues 75 to 145 form the BON domain; sequence LHVVVTQPIA…PIVNNIKVAG (71 aa).

The protein belongs to the bacterial secretin family.

Functionally, involved in the secretion of an unknown compound. This is an uncharacterized protein from Sinorhizobium fredii (strain NBRC 101917 / NGR234).